The primary structure comprises 277 residues: Pantothenate synthetase (277 aa).

Residue 26-33 (MGYLHQGH) coordinates ATP. Catalysis depends on His-33, which acts as the Proton donor. Gln-57 provides a ligand contact to (R)-pantoate. A beta-alanine-binding site is contributed by Gln-57. Residue 143–146 (GQKD) coordinates ATP. Gln-149 contacts (R)-pantoate. ATP-binding positions include Val-172 and 180–183 (LSSR).

Belongs to the pantothenate synthetase family. Homodimer.

The protein resides in the cytoplasm. The enzyme catalyses (R)-pantoate + beta-alanine + ATP = (R)-pantothenate + AMP + diphosphate + H(+). It functions in the pathway cofactor biosynthesis; (R)-pantothenate biosynthesis; (R)-pantothenate from (R)-pantoate and beta-alanine: step 1/1. Catalyzes the condensation of pantoate with beta-alanine in an ATP-dependent reaction via a pantoyl-adenylate intermediate. In Chloroflexus aggregans (strain MD-66 / DSM 9485), this protein is Pantothenate synthetase.